Consider the following 491-residue polypeptide: Glutamate--tRNA ligase (491 aa).

The 'HIGH' region signature appears at 10 to 20 (PSPTGYLHIGG). A 'KMSKS' region motif is present at residues 243–247 (KISKR). Lysine 246 serves as a coordination point for ATP.

The protein belongs to the class-I aminoacyl-tRNA synthetase family. Glutamate--tRNA ligase type 1 subfamily. In terms of assembly, monomer.

It is found in the cytoplasm. The enzyme catalyses tRNA(Glu) + L-glutamate + ATP = L-glutamyl-tRNA(Glu) + AMP + diphosphate. Its function is as follows. Catalyzes the attachment of glutamate to tRNA(Glu) in a two-step reaction: glutamate is first activated by ATP to form Glu-AMP and then transferred to the acceptor end of tRNA(Glu). The sequence is that of Glutamate--tRNA ligase from Desulfotalea psychrophila (strain LSv54 / DSM 12343).